The primary structure comprises 526 residues: Glutamate--cysteine ligase (526 aa).

The protein belongs to the glutamate--cysteine ligase type 1 family. Type 1 subfamily.

The enzyme catalyses L-cysteine + L-glutamate + ATP = gamma-L-glutamyl-L-cysteine + ADP + phosphate + H(+). It participates in sulfur metabolism; glutathione biosynthesis; glutathione from L-cysteine and L-glutamate: step 1/2. The sequence is that of Glutamate--cysteine ligase from Proteus mirabilis (strain HI4320).